We begin with the raw amino-acid sequence, 49 residues long: Large ribosomal subunit protein bL33A (49 aa).

It belongs to the bacterial ribosomal protein bL33 family.

The chain is Large ribosomal subunit protein bL33A from Staphylococcus aureus (strain COL).